Here is a 391-residue protein sequence, read N- to C-terminus: Formate-dependent phosphoribosylglycinamide formyltransferase (391 aa).

N(1)-(5-phospho-beta-D-ribosyl)glycinamide is bound by residues 20–21 (EL) and E80. Residues R112, K153, 158–163 (SSGKGQ), 193–196 (EGFI), and E201 contribute to the ATP site. The 190-residue stretch at 117–306 (RLAAETLGLP…EFALHVRAIQ (190 aa)) folds into the ATP-grasp domain. Mg(2+) is bound by residues E265 and E277. N(1)-(5-phospho-beta-D-ribosyl)glycinamide is bound by residues D284, K354, and 361-362 (RR).

The protein belongs to the PurK/PurT family. As to quaternary structure, homodimer.

It catalyses the reaction N(1)-(5-phospho-beta-D-ribosyl)glycinamide + formate + ATP = N(2)-formyl-N(1)-(5-phospho-beta-D-ribosyl)glycinamide + ADP + phosphate + H(+). It functions in the pathway purine metabolism; IMP biosynthesis via de novo pathway; N(2)-formyl-N(1)-(5-phospho-D-ribosyl)glycinamide from N(1)-(5-phospho-D-ribosyl)glycinamide (formate route): step 1/1. In terms of biological role, involved in the de novo purine biosynthesis. Catalyzes the transfer of formate to 5-phospho-ribosyl-glycinamide (GAR), producing 5-phospho-ribosyl-N-formylglycinamide (FGAR). Formate is provided by PurU via hydrolysis of 10-formyl-tetrahydrofolate. The chain is Formate-dependent phosphoribosylglycinamide formyltransferase from Shewanella baltica (strain OS185).